The sequence spans 324 residues: Malate dehydrogenase (324 aa).

NAD(+) is bound by residues 21-26 and aspartate 45; that span reads GAGRVG. Positions 94 and 100 each coordinate substrate. NAD(+) contacts are provided by residues asparagine 107 and 130-132; that span reads VTN. Residues asparagine 132 and arginine 163 each coordinate substrate. Catalysis depends on histidine 187, which acts as the Proton acceptor.

The protein belongs to the LDH/MDH superfamily. MDH type 3 family.

It catalyses the reaction (S)-malate + NAD(+) = oxaloacetate + NADH + H(+). Its function is as follows. Catalyzes the reversible oxidation of malate to oxaloacetate. This chain is Malate dehydrogenase, found in Trichormus variabilis (strain ATCC 29413 / PCC 7937) (Anabaena variabilis).